The chain runs to 486 residues: Ribosomal protein uS12 methylthiotransferase RimO (486 aa).

The region spanning 9–125 is the MTTase N-terminal domain; it reads RSVALVTLGC…LSSHLEAILH (117 aa). Positions 18, 54, 88, 191, 195, and 198 each coordinate [4Fe-4S] cluster. In terms of domain architecture, Radical SAM core spans 177-408; sequence LGSGPWAPVK…RLVEELVTQR (232 aa). The TRAM domain maps to 410 to 482; it reads EERLGEVVEV…GADLLAEPLV (73 aa).

The protein belongs to the methylthiotransferase family. RimO subfamily. [4Fe-4S] cluster is required as a cofactor.

The protein resides in the cytoplasm. It catalyses the reaction L-aspartate(89)-[ribosomal protein uS12]-hydrogen + (sulfur carrier)-SH + AH2 + 2 S-adenosyl-L-methionine = 3-methylsulfanyl-L-aspartate(89)-[ribosomal protein uS12]-hydrogen + (sulfur carrier)-H + 5'-deoxyadenosine + L-methionine + A + S-adenosyl-L-homocysteine + 2 H(+). Catalyzes the methylthiolation of an aspartic acid residue of ribosomal protein uS12. The polypeptide is Ribosomal protein uS12 methylthiotransferase RimO (Kineococcus radiotolerans (strain ATCC BAA-149 / DSM 14245 / SRS30216)).